The sequence spans 173 residues: Crossover junction endodeoxyribonuclease RuvC (173 aa).

Active-site residues include Asp-8, Glu-67, and Asp-139. 3 residues coordinate Mg(2+): Asp-8, Glu-67, and Asp-139.

Belongs to the RuvC family. In terms of assembly, homodimer which binds Holliday junction (HJ) DNA. The HJ becomes 2-fold symmetrical on binding to RuvC with unstacked arms; it has a different conformation from HJ DNA in complex with RuvA. In the full resolvosome a probable DNA-RuvA(4)-RuvB(12)-RuvC(2) complex forms which resolves the HJ. Mg(2+) is required as a cofactor.

Its subcellular location is the cytoplasm. The catalysed reaction is Endonucleolytic cleavage at a junction such as a reciprocal single-stranded crossover between two homologous DNA duplexes (Holliday junction).. In terms of biological role, the RuvA-RuvB-RuvC complex processes Holliday junction (HJ) DNA during genetic recombination and DNA repair. Endonuclease that resolves HJ intermediates. Cleaves cruciform DNA by making single-stranded nicks across the HJ at symmetrical positions within the homologous arms, yielding a 5'-phosphate and a 3'-hydroxyl group; requires a central core of homology in the junction. The consensus cleavage sequence is 5'-(A/T)TT(C/G)-3'. Cleavage occurs on the 3'-side of the TT dinucleotide at the point of strand exchange. HJ branch migration catalyzed by RuvA-RuvB allows RuvC to scan DNA until it finds its consensus sequence, where it cleaves and resolves the cruciform DNA. The polypeptide is Crossover junction endodeoxyribonuclease RuvC (Klebsiella pneumoniae (strain 342)).